The following is a 376-amino-acid chain: MEPYDVVVNQPVVIDNGSGVIKAGFAGEHIPKCRFPNYIGRPKHVRVMAGALEGDIFVGPKAEEHRGLLSIRYPMEHGIVTDWNDMERIWSYIYSKEQLATFTEDHPVLLTEAPLNPRRNREKAAEFFFEGINAPALFVSMQAVLSLYATGRVTGVVLDSGDGVTHAVPIYEGFAMPHSIMRVDIAGRDVTRYLKTLIRREGFNFRSTAEFEIVRSIKEKVCYLATNPQKEETVETEKFAYKLPDGKIFEIGPARFRAPEVLFRPDLLGEECEGIHDVLMYSIEKSDMDLRKMLYQNIVLSGGSTLFKGFGDRLLSELKKHSAKDLKIRIAAPQERLYSTWMGGSILASLDTFKKMWISKREYEEEGQKAVHRKTF.

Belongs to the actin family. ARP1 subfamily.

It localises to the cytoplasm. The protein resides in the cytoskeleton. This chain is Actin-related protein 1 (Arp1), found in Drosophila melanogaster (Fruit fly).